Reading from the N-terminus, the 363-residue chain is NADH-quinone oxidoreductase subunit H (363 aa).

10 helical membrane-spanning segments follow: residues 29-49 (VLKI…YVVW), 62-82 (GPMY…KLLF), 96-116 (FIIA…VVPF), 127-147 (VGLL…ILAG), 163-183 (AAQV…VMIA), 202-222 (FFDW…VSGV), 239-257 (IVAG…LFFL), 264-286 (ILVS…QGWV), 299-319 (TGGW…YIWF), and 339-359 (FIPL…YGVI).

The protein belongs to the complex I subunit 1 family. As to quaternary structure, NDH-1 is composed of 14 different subunits. Subunits NuoA, H, J, K, L, M, N constitute the membrane sector of the complex.

It is found in the cell inner membrane. It catalyses the reaction a quinone + NADH + 5 H(+)(in) = a quinol + NAD(+) + 4 H(+)(out). In terms of biological role, NDH-1 shuttles electrons from NADH, via FMN and iron-sulfur (Fe-S) centers, to quinones in the respiratory chain. The immediate electron acceptor for the enzyme in this species is believed to be ubiquinone. Couples the redox reaction to proton translocation (for every two electrons transferred, four hydrogen ions are translocated across the cytoplasmic membrane), and thus conserves the redox energy in a proton gradient. This subunit may bind ubiquinone. The protein is NADH-quinone oxidoreductase subunit H of Xanthomonas campestris pv. campestris (strain B100).